The primary structure comprises 472 residues: Siroheme synthase (472 aa).

Residues 1 to 204 (MDYLPIFTKL…GQTEKAIALM (204 aa)) are precorrin-2 dehydrogenase /sirohydrochlorin ferrochelatase. Residues 22–23 (SI) and 43–44 (LE) contribute to the NAD(+) site. Ser-128 carries the post-translational modification Phosphoserine. Residues 215 to 472 (GDVALVGAGP…SRDPFLVNLA (258 aa)) form a uroporphyrinogen-III C-methyltransferase region. Pro-224 contacts S-adenosyl-L-methionine. Catalysis depends on Asp-247, which acts as the Proton acceptor. The active-site Proton donor is Lys-269. Residues 300–302 (GGD), Ile-305, 330–331 (TA), Met-382, and Gly-411 contribute to the S-adenosyl-L-methionine site.

In the N-terminal section; belongs to the precorrin-2 dehydrogenase / sirohydrochlorin ferrochelatase family. This sequence in the C-terminal section; belongs to the precorrin methyltransferase family.

The enzyme catalyses uroporphyrinogen III + 2 S-adenosyl-L-methionine = precorrin-2 + 2 S-adenosyl-L-homocysteine + H(+). The catalysed reaction is precorrin-2 + NAD(+) = sirohydrochlorin + NADH + 2 H(+). It carries out the reaction siroheme + 2 H(+) = sirohydrochlorin + Fe(2+). The protein operates within cofactor biosynthesis; adenosylcobalamin biosynthesis; precorrin-2 from uroporphyrinogen III: step 1/1. It participates in cofactor biosynthesis; adenosylcobalamin biosynthesis; sirohydrochlorin from precorrin-2: step 1/1. It functions in the pathway porphyrin-containing compound metabolism; siroheme biosynthesis; precorrin-2 from uroporphyrinogen III: step 1/1. Its pathway is porphyrin-containing compound metabolism; siroheme biosynthesis; siroheme from sirohydrochlorin: step 1/1. The protein operates within porphyrin-containing compound metabolism; siroheme biosynthesis; sirohydrochlorin from precorrin-2: step 1/1. Multifunctional enzyme that catalyzes the SAM-dependent methylations of uroporphyrinogen III at position C-2 and C-7 to form precorrin-2 via precorrin-1. Then it catalyzes the NAD-dependent ring dehydrogenation of precorrin-2 to yield sirohydrochlorin. Finally, it catalyzes the ferrochelation of sirohydrochlorin to yield siroheme. In Psychromonas ingrahamii (strain DSM 17664 / CCUG 51855 / 37), this protein is Siroheme synthase.